Reading from the N-terminus, the 237-residue chain is Probable transcriptional regulatory protein NIS_0560 (237 aa).

It belongs to the TACO1 family.

It localises to the cytoplasm. The sequence is that of Probable transcriptional regulatory protein NIS_0560 from Nitratiruptor sp. (strain SB155-2).